Here is a 526-residue protein sequence, read N- to C-terminus: MLMLLVRGTHYENLRPKVVLPTPLVGRSTETFVSEFPGPDTGIRWRRSDEALRVNVGGVRRQLSARALARFPGTRLGRLQAAASEEQARRLCDDYDEAAREFYFDRHPGFFLGLLHFYRTGHLHVLDELCVFAFGQEADYWGLGENALAACCRARYLERRLTQPHAWDEDSDTPSSVDPCPDEISDVQRELARYGAARCGRLRRRLWLTMENPGYSLPSKLFSCVSISVVLASIAAMCIHSLPEYQAREAAAAVAAVAAGRSPEGVRDDPVLRRLEYFCIAWFSFEVSSRLLLAPSTRNFFCHPLNLIDIVSVLPFYLTLLAGVALGDQGGKEFGHLGKVVQVFRLMRIFRVLKLARHSTGLRSLGATLKHSYREVGILLLYLAVGVSVFSGVAYTAEKEEDVGFNTIPACWWWGTVSMTTVGYGDVVPVTVAGKLAASGCILGGILVVALPITIIFNKFSHFYRRQKALEAAVRNSNHREFEDLLSSVDGVSEASLETSRETSQEGRSADLESQAPSEPPHPQMY.

The Cytoplasmic segment spans residues 1 to 217; it reads MLMLLVRGTH…LTMENPGYSL (217 aa). Residues 218 to 239 form a helical membrane-spanning segment; sequence PSKLFSCVSISVVLASIAAMCI. Topologically, residues 240–270 are extracellular; it reads HSLPEYQAREAAAAVAAVAAGRSPEGVRDDP. Residues 271-293 traverse the membrane as a helical segment; that stretch reads VLRRLEYFCIAWFSFEVSSRLLL. Residues 294-304 are Cytoplasmic-facing; that stretch reads APSTRNFFCHP. Residues 305–322 form a helical membrane-spanning segment; sequence LNLIDIVSVLPFYLTLLA. Over 323 to 337 the chain is Extracellular; it reads GVALGDQGGKEFGHL. Residues 338–358 form a helical; Voltage-sensor membrane-spanning segment; that stretch reads GKVVQVFRLMRIFRVLKLARH. Topologically, residues 359–373 are cytoplasmic; it reads STGLRSLGATLKHSY. The helical transmembrane segment at 374–395 threads the bilayer; sequence REVGILLLYLAVGVSVFSGVAY. The Extracellular segment spans residues 396–408; the sequence is TAEKEEDVGFNTI. Positions 409–420 form an intramembrane region, helical; it reads PACWWWGTVSMT. The Selectivity filter signature appears at 421–426; sequence TVGYGD. An intramembrane segment occupies 421–428; sequence TVGYGDVV. At 429 to 435 the chain is on the extracellular side; the sequence is PVTVAGK. A helical membrane pass occupies residues 436–464; the sequence is LAASGCILGGILVVALPITIIFNKFSHFY. Over 465 to 526 the chain is Cytoplasmic; that stretch reads RRQKALEAAV…PSEPPHPQMY (62 aa). Residues 491–526 are disordered; it reads GVSEASLETSRETSQEGRSADLESQAPSEPPHPQMY. The span at 499-511 shows a compositional bias: basic and acidic residues; it reads TSRETSQEGRSAD.

This sequence belongs to the potassium channel family. S (TC 1.A.1.2) subfamily. Kv9.1/KCNS1 sub-subfamily. Heterotetramer with KCNB1. Heterotetramer with KCNB2. Does not form homomultimers.

It is found in the cell membrane. Its function is as follows. Potassium channel regulatory subunit that modulate the delayed rectifier voltage-gated potassium channel activity of KCNB1 and KCNB2 by altering their kinetics, expression levels, and shifting the half-inactivation potential to more polarized values. While it does not form functional channels on its own, it can form functional heterotetrameric channels with KCNB1 and KCNB2. Each regulatory subunit has unique regulatory properties that can lead to extensive inhibition, significant changes in kinetics, and/or substantial shifts in the voltage dependencies of the inactivation process. In Pongo abelii (Sumatran orangutan), this protein is Delayed-rectifier potassium channel regulatory subunit KCNS1.